The primary structure comprises 253 residues: Homeobox protein EMX2 (253 aa).

Positions Pro155–Lys214 form a DNA-binding region, homeobox. Residues Gln213–Asp253 form a disordered region. Residues Lys225 to Arg234 show a composition bias toward basic residues.

It belongs to the EMX homeobox family. In terms of assembly, interacts with translation initiation factor EIF4E.

The protein localises to the nucleus. The protein resides in the cell projection. It localises to the axon. Transcription factor, which in cooperation with EMX1, acts to generate the boundary between the roof and archipallium in the developing brain. May function in combination with OTX1/2 to specify cell fates in the developing central nervous system. In the inner ear, it controls the distribution of GPR156 at hair cell boundaries, and regulates the organization of stereociliary bundles in opposite orientations across the line of polarity reversal (LPR). The protein is Homeobox protein EMX2 (EMX2) of Bos taurus (Bovine).